The primary structure comprises 238 residues: Probable transcriptional regulatory protein SpyM51586 (238 aa).

It belongs to the TACO1 family. YeeN subfamily.

Its subcellular location is the cytoplasm. The sequence is that of Probable transcriptional regulatory protein SpyM51586 from Streptococcus pyogenes serotype M5 (strain Manfredo).